We begin with the raw amino-acid sequence, 116 residues long: UPF0482 protein ECA2253 (116 aa).

Positions 1–31 (MNHYSFSSLIRALIPLSLVIVSAVWQPAALA) are cleaved as a signal peptide.

This sequence belongs to the UPF0482 family.

The chain is UPF0482 protein ECA2253 from Pectobacterium atrosepticum (strain SCRI 1043 / ATCC BAA-672) (Erwinia carotovora subsp. atroseptica).